The following is a 141-amino-acid chain: VLSEEDKSHVKAIWGKVAGHLEEYGAEALERMFCAYPQTKIYFPHFDMSHNSAQIRGHGKKVFAALHDAVNHIDDLAGALCRLSDLHAHNLRVDPVNFKFLSQCILVVFGVHHPCSLTPEVHASLDKFLCAVSAMLTSKYR.

Residues 1–141 (VLSEEDKSHV…VSAMLTSKYR (141 aa)) form the Globin domain. Histidine 58 lines the O2 pocket. Histidine 87 contacts heme b.

The protein belongs to the globin family. In terms of assembly, heterotetramer of two alpha chains and two beta chains. In terms of tissue distribution, red blood cells.

Its function is as follows. Involved in oxygen transport from the lung to the various peripheral tissues. The sequence is that of Hemoglobin subunit alpha (HBA) from Caiman crocodilus (Spectacled caiman).